Here is a 137-residue protein sequence, read N- to C-terminus: MNNMSLSDIFERFDTSKDGKISWEEFRDAIHALSPSIPSEKLVEMFIQLDTNGDGQVDAAKFASCMDQTAQSSGGDVEKELKDAFKLYDINCDGKISANELHVVMTRLGEKCTVESCVGMVQAIDVDGDGYIRFVGV.

EF-hand domains lie at 1-36 (MNNM…LSPS), 37-72 (IPSE…TAQS), 76-111 (DVEK…LGEK), and 112-137 (CTVE…FVGV). Ca(2+) contacts are provided by D14, S16, D18, K20, and E25. D89, N91, D93, K95, and E100 together coordinate Ca(2+).

Potential calcium sensor. This is Probable calcium-binding protein CML33 (CML33) from Arabidopsis thaliana (Mouse-ear cress).